A 232-amino-acid polypeptide reads, in one-letter code: Ribonuclease P protein component 3 (232 aa).

The protein belongs to the eukaryotic/archaeal RNase P protein component 3 family. In terms of assembly, consists of a catalytic RNA component and at least 4-5 protein subunits.

The protein localises to the cytoplasm. The enzyme catalyses Endonucleolytic cleavage of RNA, removing 5'-extranucleotides from tRNA precursor.. Part of ribonuclease P, a protein complex that generates mature tRNA molecules by cleaving their 5'-ends. This chain is Ribonuclease P protein component 3, found in Halobacterium salinarum (strain ATCC 29341 / DSM 671 / R1).